The primary structure comprises 515 residues: G-protein coupled receptor 176 (515 aa).

The segment covering 1–16 has biased composition (polar residues); sequence MGHNGSWISPNASEPH. A disordered region spans residues 1–20; that stretch reads MGHNGSWISPNASEPHNASG. At 1-42 the chain is on the extracellular side; that stretch reads MGHNGSWISPNASEPHNASGAEAAGVNRSALGEFGEAQLYRQ. N-linked (GlcNAc...) asparagine glycans are attached at residues Asn-4, Asn-11, Asn-17, and Asn-27. Residues 43 to 63 traverse the membrane as a helical segment; sequence FTTTVQVVIFIGSLLGNFMVL. Topologically, residues 64–82 are cytoplasmic; sequence WSTCRTTVFKSVTNRFIKN. A helical membrane pass occupies residues 83-103; the sequence is LACSGICASLVCVPFDIILST. At 104–118 the chain is on the extracellular side; sequence SPHCCWWIYTMLFCK. A helical membrane pass occupies residues 119 to 139; the sequence is VVKFLHKVFCSVTILSFPAIA. Topologically, residues 140–160 are cytoplasmic; sequence LDRYYSVLYPLERKISDAKSR. The chain crosses the membrane as a helical span at residues 161 to 181; it reads ELVMYIWAHAVVASVPVFAVT. Residues 182–207 lie on the Extracellular side of the membrane; the sequence is NVADIYATSTCTEVWSNSLGHLVYVL. Residues 208–228 form a helical membrane-spanning segment; it reads VYNITTVIVPVVVVFLFLILI. Topologically, residues 229–267 are cytoplasmic; that stretch reads RRALSASQKKKVIIAALRTPQNTISIPYASQREAELHAT. The chain crosses the membrane as a helical span at residues 268 to 288; sequence LLSMVMVFILCSVPYATLVVY. The Extracellular segment spans residues 289-299; that stretch reads QTVLNVPDTSV. Residues 300-320 form a helical membrane-spanning segment; it reads FLLLTAVWLPKVSLLANPVLF. The Cytoplasmic segment spans residues 321 to 515; that stretch reads LTVNKSVRKC…KVSIFPKVDS (195 aa).

This sequence belongs to the G-protein coupled receptor 1 family.

The protein localises to the cell membrane. Orphan receptor involved in normal circadian rhythm behavior. Acts through the G-protein subclass G(z)-alpha and has an agonist-independent basal activity to repress cAMP production. This chain is G-protein coupled receptor 176 (GPR176), found in Homo sapiens (Human).